Reading from the N-terminus, the 306-residue chain is MSNKFINFEKISRESWKTLHQKAKALLTQEELKSITSLNDNISINDVIDIYLPLINLIQVYKIAQENLSFSKSLFLKKDIQLRPFIIGISGSVAVGKSTTSRLLQLLLSRTHPNSQVELVTTDGFLYPNQFLIEQGLLNRKGFPESYNMELLLDFLDSIKNGQTAFAPVYSHDIYDIIPNQKQSFNNPDFLIVEGINVFQNQQNNRLYMSDYFDFSIYIDADSSHIETWYIERFLSILKLAKRDPHNYYAQYAQLPRSEAIAFARNVWKTVNLENLEKFIEPTRNRAELILHKSADHKIDEIYLKK.

91 to 98 (GSVAVGKS) provides a ligand contact to ATP.

This sequence belongs to the prokaryotic pantothenate kinase family.

Its subcellular location is the cytoplasm. The catalysed reaction is (R)-pantothenate + ATP = (R)-4'-phosphopantothenate + ADP + H(+). The protein operates within cofactor biosynthesis; coenzyme A biosynthesis; CoA from (R)-pantothenate: step 1/5. This is Pantothenate kinase (coaA) from Streptococcus pyogenes serotype M3 (strain ATCC BAA-595 / MGAS315).